We begin with the raw amino-acid sequence, 473 residues long: Siroheme synthase 2 (473 aa).

Residues 1–204 (MDYFPIFCQL…NDHVQADQHV (204 aa)) form a precorrin-2 dehydrogenase /sirohydrochlorin ferrochelatase region. Residues 22–23 (EI) and 43–44 (CE) contribute to the NAD(+) site. Ser128 is subject to Phosphoserine. A uroporphyrinogen-III C-methyltransferase region spans residues 216–473 (GEVVLVGAGP…KVTECVAHVG (258 aa)). Residue Pro225 participates in S-adenosyl-L-methionine binding. Residue Asp248 is the Proton acceptor of the active site. The Proton donor role is filled by Lys270. S-adenosyl-L-methionine is bound by residues 301-303 (GGD), Ile306, 331-332 (TA), Met382, and Gly411.

This sequence in the N-terminal section; belongs to the precorrin-2 dehydrogenase / sirohydrochlorin ferrochelatase family. It in the C-terminal section; belongs to the precorrin methyltransferase family.

The enzyme catalyses uroporphyrinogen III + 2 S-adenosyl-L-methionine = precorrin-2 + 2 S-adenosyl-L-homocysteine + H(+). The catalysed reaction is precorrin-2 + NAD(+) = sirohydrochlorin + NADH + 2 H(+). It catalyses the reaction siroheme + 2 H(+) = sirohydrochlorin + Fe(2+). The protein operates within cofactor biosynthesis; adenosylcobalamin biosynthesis; precorrin-2 from uroporphyrinogen III: step 1/1. It participates in cofactor biosynthesis; adenosylcobalamin biosynthesis; sirohydrochlorin from precorrin-2: step 1/1. It functions in the pathway porphyrin-containing compound metabolism; siroheme biosynthesis; precorrin-2 from uroporphyrinogen III: step 1/1. Its pathway is porphyrin-containing compound metabolism; siroheme biosynthesis; siroheme from sirohydrochlorin: step 1/1. The protein operates within porphyrin-containing compound metabolism; siroheme biosynthesis; sirohydrochlorin from precorrin-2: step 1/1. In terms of biological role, multifunctional enzyme that catalyzes the SAM-dependent methylations of uroporphyrinogen III at position C-2 and C-7 to form precorrin-2 via precorrin-1. Then it catalyzes the NAD-dependent ring dehydrogenation of precorrin-2 to yield sirohydrochlorin. Finally, it catalyzes the ferrochelation of sirohydrochlorin to yield siroheme. The chain is Siroheme synthase 2 from Yersinia pseudotuberculosis serotype O:1b (strain IP 31758).